A 304-amino-acid chain; its full sequence is Undecaprenyl-diphosphatase (304 aa).

The next 7 membrane-spanning stretches (helical) occupy residues 1 to 21, 54 to 74, 90 to 110, 114 to 134, 192 to 212, 225 to 245, and 253 to 273; these read MSLL…FLPV, TTLA…AAGL, LAWF…LFEE, ALGN…LLAA, FLLS…KTVP, LVGT…LLGW, and LFVV…WQGV.

It belongs to the UppP family.

It is found in the cell inner membrane. It catalyses the reaction di-trans,octa-cis-undecaprenyl diphosphate + H2O = di-trans,octa-cis-undecaprenyl phosphate + phosphate + H(+). In terms of biological role, catalyzes the dephosphorylation of undecaprenyl diphosphate (UPP). Confers resistance to bacitracin. This Anaeromyxobacter sp. (strain Fw109-5) protein is Undecaprenyl-diphosphatase.